We begin with the raw amino-acid sequence, 165 residues long: LOB domain-containing protein 3 (165 aa).

The LOB domain occupies 13–115 (SPCAGCKLLR…TQLAFAQAEL (103 aa)).

Belongs to the LOB domain-containing protein family. In terms of tissue distribution, expressed in young shoots, roots, stems, leaves and flowers. At the bases of lateral organs formed from vegetative, inflorescence, and floral meristems.

It localises to the nucleus. This chain is LOB domain-containing protein 3 (LBD3), found in Arabidopsis thaliana (Mouse-ear cress).